A 496-amino-acid polypeptide reads, in one-letter code: MKRTLLCCLTLLSCPFLYADEDTQLRLNQSLDQTLLQEQRQFHEQGTIRSTEQLPKLQINGQEYSVEQNPNDLAKALYLAVMQKQWLKATVYLEHYKKYVGYDRALTDFAEGAVARSQGQLKLAEQKFQSSLKQQPHNLICELELARVLFEQQKNKEAARLFISIQDQLKQSDPAVIPSGVLTTVNTIVQALKKRDSWQGSVSAGYTYVSNLNSSSEQSKTWTLYGRDSEGNMIPVREVTRGTPKAESAIGLDYEASLIKRYAIEGHHGVALRALAFGQSYNDHATFNESTININAGYSYFDLKNQIGVSPLFEHKRYGNDGLYNAWGARAEWMHFISADKAFKLEAESKDLNYQKYKTLDGVESSAFATFWKIFPDQWTFFGGLDVLDHSTQEKYMAAYQQQGVRLGLSKSWSTGFNTTLLSSYRWRLFDKYAETFLARRHDFEQNHTFVVQMPRFEFYGMTPNLTYRYNHNKSNVDWLYSYDKHNISFKLEHRF.

Positions 1 to 19 are cleaved as a signal peptide; the sequence is MKRTLLCCLTLLSCPFLYA. 14 beta stranded membrane-spanning segments follow: residues 198-208, 253-263, 268-277, 291-301, 305-315, 327-337, 341-351, 365-374, 380-389, 403-413, 418-427, 446-455, 462-472, and 486-495; these read WQGSVSAGYTY, DYEASLIKRYA, HGVALRALAF, TININAGYSYF, NQIGVSPLFEH, WGARAEWMHFI, KAFKLEAESKD, SSAFATFWKI, TFFGGLDVLD, QGVRLGLSKSW, NTTLLSSYRW, QNHTFVVQMP, MTPNLTYRYNH, and HNISFKLEHR.

This sequence belongs to the Slam family.

Its subcellular location is the cell outer membrane. Functionally, part of a high affinity heme acquisition system. Mediates the secretion of the hemophilin HphA across the outer membrane into the extracellular environment. Plays a supporting role for full virulence. In Acinetobacter baumannii, this protein is Hemophilin secretion modulator.